The sequence spans 197 residues: Translation machinery-associated protein 22 (197 aa).

The SUI1 domain occupies 103–174; sequence IRIKRVERNK…DVREFLIKNY (72 aa).

The protein belongs to the DENR family. Interacts with the 40S ribosomal subunit.

The protein resides in the cytoplasm. In Botryotinia fuckeliana (strain B05.10) (Noble rot fungus), this protein is Translation machinery-associated protein 22 (tma22).